The following is a 216-amino-acid chain: Pyridoxine/pyridoxamine 5'-phosphate oxidase (216 aa).

Substrate is bound by residues 12-15 and K70; that span reads RREY. FMN-binding positions include 65 to 70, 80 to 81, R86, K87, and Q109; these read RLVLLK and YT. Substrate is bound by residues Y127, R131, and S135. FMN contacts are provided by residues 144-145 and W189; that span reads QS. 195–197 provides a ligand contact to substrate; it reads RLH. R199 lines the FMN pocket.

The protein belongs to the pyridoxamine 5'-phosphate oxidase family. As to quaternary structure, homodimer. Requires FMN as cofactor.

It carries out the reaction pyridoxamine 5'-phosphate + O2 + H2O = pyridoxal 5'-phosphate + H2O2 + NH4(+). It catalyses the reaction pyridoxine 5'-phosphate + O2 = pyridoxal 5'-phosphate + H2O2. It functions in the pathway cofactor metabolism; pyridoxal 5'-phosphate salvage; pyridoxal 5'-phosphate from pyridoxamine 5'-phosphate: step 1/1. The protein operates within cofactor metabolism; pyridoxal 5'-phosphate salvage; pyridoxal 5'-phosphate from pyridoxine 5'-phosphate: step 1/1. Catalyzes the oxidation of either pyridoxine 5'-phosphate (PNP) or pyridoxamine 5'-phosphate (PMP) into pyridoxal 5'-phosphate (PLP). The polypeptide is Pyridoxine/pyridoxamine 5'-phosphate oxidase (Baumannia cicadellinicola subsp. Homalodisca coagulata).